A 192-amino-acid polypeptide reads, in one-letter code: dTTP/UTP pyrophosphatase (192 aa).

Aspartate 72 serves as the catalytic Proton acceptor.

Belongs to the Maf family. YhdE subfamily. Requires a divalent metal cation as cofactor.

The protein resides in the cytoplasm. It carries out the reaction dTTP + H2O = dTMP + diphosphate + H(+). The catalysed reaction is UTP + H2O = UMP + diphosphate + H(+). Its function is as follows. Nucleoside triphosphate pyrophosphatase that hydrolyzes dTTP and UTP. May have a dual role in cell division arrest and in preventing the incorporation of modified nucleotides into cellular nucleic acids. The sequence is that of dTTP/UTP pyrophosphatase from Hydrogenovibrio crunogenus (strain DSM 25203 / XCL-2) (Thiomicrospira crunogena).